The following is a 263-amino-acid chain: Ret finger protein-like 4B (263 aa).

The RING-type zinc finger occupies 11–53 (CPVCLDFFSCSISLSCTHVFCFDCIQRYILENHDFRAMCPLCR). The B30.2/SPRY domain occupies 76–263 (HNSRLEQSLH…ESGNVLTICP (188 aa)).

This Homo sapiens (Human) protein is Ret finger protein-like 4B (RFPL4B).